Here is a 433-residue protein sequence, read N- to C-terminus: Enolase (433 aa).

Gln167 is a (2R)-2-phosphoglycerate binding site. Catalysis depends on Glu209, which acts as the Proton donor. Residues Asp246, Glu291, and Asp318 each contribute to the Mg(2+) site. Residues Lys343, Arg372, Ser373, and Lys394 each contribute to the (2R)-2-phosphoglycerate site. Lys343 (proton acceptor) is an active-site residue.

Belongs to the enolase family. As to quaternary structure, component of the RNA degradosome, a multiprotein complex involved in RNA processing and mRNA degradation. The cofactor is Mg(2+).

The protein resides in the cytoplasm. It is found in the secreted. The protein localises to the cell surface. It catalyses the reaction (2R)-2-phosphoglycerate = phosphoenolpyruvate + H2O. It participates in carbohydrate degradation; glycolysis; pyruvate from D-glyceraldehyde 3-phosphate: step 4/5. In terms of biological role, catalyzes the reversible conversion of 2-phosphoglycerate (2-PG) into phosphoenolpyruvate (PEP). It is essential for the degradation of carbohydrates via glycolysis. This chain is Enolase, found in Aeromonas hydrophila subsp. hydrophila (strain ATCC 7966 / DSM 30187 / BCRC 13018 / CCUG 14551 / JCM 1027 / KCTC 2358 / NCIMB 9240 / NCTC 8049).